Here is a 122-residue protein sequence, read N- to C-terminus: Replication termination protein (122 aa).

In terms of assembly, homodimer.

Plays a role in DNA replication and termination (fork arrest mechanism). Two dimers of rtp bind to the two inverted repeat regions (IRI and IRII) present in the termination site. The binding of each dimer is centered on an 8 bp direct repeat. The polypeptide is Replication termination protein (rtp) (Bacillus spizizenii (strain ATCC 23059 / NRRL B-14472 / W23) (Bacillus subtilis subsp. spizizenii)).